Reading from the N-terminus, the 900-residue chain is Bifunctional uridylyltransferase/uridylyl-removing enzyme (900 aa).

The tract at residues 1–342 (MPQVDPELFD…WEGESGPIVP (342 aa)) is uridylyltransferase. The segment at 343–705 (LNSRFQVRDG…TTQREFEGGT (363 aa)) is uridylyl-removing. Residues 461-583 (VDAHTLNVIK…VGDETHLDYL (123 aa)) form the HD domain. ACT domains are found at residues 706-789 (QIFI…IIQR) and 816-896 (ILEI…PSPS).

This sequence belongs to the GlnD family. It depends on Mg(2+) as a cofactor.

It carries out the reaction [protein-PII]-L-tyrosine + UTP = [protein-PII]-uridylyl-L-tyrosine + diphosphate. The catalysed reaction is [protein-PII]-uridylyl-L-tyrosine + H2O = [protein-PII]-L-tyrosine + UMP + H(+). Uridylyltransferase (UTase) activity is inhibited by glutamine, while glutamine activates uridylyl-removing (UR) activity. In terms of biological role, modifies, by uridylylation and deuridylylation, the PII regulatory proteins (GlnB and homologs), in response to the nitrogen status of the cell that GlnD senses through the glutamine level. Under low glutamine levels, catalyzes the conversion of the PII proteins and UTP to PII-UMP and PPi, while under higher glutamine levels, GlnD hydrolyzes PII-UMP to PII and UMP (deuridylylation). Thus, controls uridylylation state and activity of the PII proteins, and plays an important role in the regulation of nitrogen fixation and metabolism. The polypeptide is Bifunctional uridylyltransferase/uridylyl-removing enzyme (Stutzerimonas stutzeri (strain A1501) (Pseudomonas stutzeri)).